We begin with the raw amino-acid sequence, 192 residues long: dCTP deaminase, dUMP-forming (192 aa).

DCTP is bound by residues 101–106 (KSSLGR), aspartate 119, 127–129 (TLE), glutamine 148, tyrosine 162, and glutamine 174. Glutamate 129 serves as the catalytic Proton donor/acceptor. A disordered region spans residues 169–192 (SRYQGQRGPTPSRSWQSWRTWPTR). Polar residues predominate over residues 171–192 (YQGQRGPTPSRSWQSWRTWPTR).

It belongs to the dCTP deaminase family. As to quaternary structure, homotrimer.

It carries out the reaction dCTP + 2 H2O = dUMP + NH4(+) + diphosphate. It functions in the pathway pyrimidine metabolism; dUMP biosynthesis; dUMP from dCTP: step 1/1. In terms of biological role, bifunctional enzyme that catalyzes both the deamination of dCTP to dUTP and the hydrolysis of dUTP to dUMP without releasing the toxic dUTP intermediate. This is dCTP deaminase, dUMP-forming from Salinispora tropica (strain ATCC BAA-916 / DSM 44818 / JCM 13857 / NBRC 105044 / CNB-440).